Here is a 534-residue protein sequence, read N- to C-terminus: Probable inorganic phosphate transporter 1-8 (534 aa).

The Cytoplasmic portion of the chain corresponds to 1–21 (MPIKVLSSLDVARTQWYHFKA). Residues 22-42 (IIVAGMGLFTDAYDLFCIAPV) traverse the membrane as a helical segment. The Extracellular segment spans residues 43–61 (MKMISHVYYNGDSINTAVL). Residues 62-82 (STSYAIALLGTATGQLVFGYL) traverse the membrane as a helical segment. At 83–90 (GDRVGRRR) the chain is on the cytoplasmic side. Residues 91 to 111 (VYGLCLIIMILSSFGCGFSVC) traverse the membrane as a helical segment. Residues 112 to 123 (TTRRSCVMVSLG) lie on the Extracellular side of the membrane. A helical membrane pass occupies residues 124-144 (FFRFFLGLGIGGDYPLSATIM). At 145 to 153 (SEFANKRTR) the chain is on the cytoplasmic side. Residues 154–174 (GAFIAAVFSMQGLGILVSSAV) traverse the membrane as a helical segment. Residues 175–199 (TMAVCVAFKRSGGGLEVDAAAPTEA) lie on the Extracellular side of the membrane. Residues 200-220 (DLAWRLILMIGALPAALTFYW) form a helical membrane-spanning segment. Residues 221–281 (RMLMPETARY…KLFSRCFFRL (61 aa)) lie on the Cytoplasmic side of the membrane. The helical transmembrane segment at 282-302 (HGRDLFAASFNWFLVDIVFYT) threads the bilayer. At 303 to 333 (SNLLLSHIFSHYSKKPSTAENVYDAAFEVAE) the chain is on the extracellular side. A helical membrane pass occupies residues 334–354 (LGAIIAACSTIPGYWFTVYFI). The Cytoplasmic portion of the chain corresponds to 355–361 (DKIGRVK). A helical transmembrane segment spans residues 362–382 (IQIMGFFFMAVIYLVAGIPYS). Over 383–396 (WYWSKHEHNNKGFM) the chain is Extracellular. A helical membrane pass occupies residues 397-417 (VLYGLVFFFCNFGPNTTTFII). The Cytoplasmic segment spans residues 418-431 (PAEHFPARFRSTCH). A helical membrane pass occupies residues 432–452 (GISGAAGKLGAIVGTVGFLWA). The Extracellular segment spans residues 453 to 472 (TKKMESDDKNQIYPEVNRMR). A helical transmembrane segment spans residues 473 to 493 (IAFLILGGVCIAGILVTYFFT). At 494–534 (KETMGRSLEENEHDQDNNAESEDEPQIVDGQSSVSTLLQTR) the chain is on the cytoplasmic side. The disordered stretch occupies residues 501-534 (LEENEHDQDNNAESEDEPQIVDGQSSVSTLLQTR). The segment covering 510–519 (NNAESEDEPQ) has biased composition (acidic residues). Ser514 bears the Phosphoserine mark. Residues 522 to 534 (DGQSSVSTLLQTR) are compositionally biased toward polar residues.

This sequence belongs to the major facilitator superfamily. Phosphate:H(+) symporter (TC 2.A.1.9) family. In terms of tissue distribution, in roots.

It is found in the membrane. High-affinity transporter for external inorganic phosphate. The sequence is that of Probable inorganic phosphate transporter 1-8 (PHT1-8) from Arabidopsis thaliana (Mouse-ear cress).